The following is a 238-amino-acid chain: MIHQLLAEFMGTALMIIFGVGVHCSEVLKGTKYRGSGHIFAITTWGFGITIALFIFGNVCINPAMVLAQCILGNLSWSLFIPYSVAEVLGGVVGAVIVWIMYADHFAASADEISPITIRNLFSTAPAVRNLPRNFFVEFFDTFIFISGILAISEVKTPGIVPIGVGLLVWAIGMGLGGPTGFAMNLARDMGPRIAHAILPIKNKADSDWQYGIIVPGIAPFVGAACAALFMHGFFGIG.

The next 2 membrane-spanning stretches (helical) occupy residues 2-22 (IHQLLAEFMGTALMIIFGVGV) and 39-59 (IFAITTWGFGITIALFIFGNV). Residues 62-64 (NPA) carry the NPA 1 motif. 3 helical membrane-spanning segments follow: residues 80 to 100 (FIPYSVAEVLGGVVGAVIVWI), 135 to 155 (FFVEFFDTFIFISGILAISEV), and 158 to 178 (PGIVPIGVGLLVWAIGMGLGG). Positions 185 to 187 (NLA) match the NPA 2 motif. Residues 211-231 (YGIIVPGIAPFVGAACAALFM) traverse the membrane as a helical segment.

It belongs to the MIP/aquaporin (TC 1.A.8) family.

The protein localises to the cell membrane. Its function is as follows. Transporter that facilitates the transmembrane diffusion of water, dihydroxyacetone, glycerol, urea, H(2)O(2) and D/L-lactic acid. Is involved in the cellular racemization of lactate and lactate metabolism, but has likely a more general physiological role. The transported molecule is indeed lactic acid and not the lactate anion, in agreement with the assumption that, with very few exceptions, MIPs (major intrinsic proteins) only facilitate the transport of uncharged solutes. This chain is Glycerol uptake facilitator protein 4, found in Lactiplantibacillus plantarum (strain ATCC BAA-793 / NCIMB 8826 / WCFS1) (Lactobacillus plantarum).